Here is a 259-residue protein sequence, read N- to C-terminus: Phosphoadenosine 5'-phosphosulfate reductase (259 aa).

The active-site Nucleophile; cysteine thiosulfonate intermediate is C244.

The protein belongs to the PAPS reductase family. CysH subfamily.

It localises to the cytoplasm. It catalyses the reaction [thioredoxin]-disulfide + sulfite + adenosine 3',5'-bisphosphate + 2 H(+) = [thioredoxin]-dithiol + 3'-phosphoadenylyl sulfate. The protein operates within sulfur metabolism; hydrogen sulfide biosynthesis; sulfite from sulfate: step 3/3. Functionally, catalyzes the formation of sulfite from phosphoadenosine 5'-phosphosulfate (PAPS) using thioredoxin as an electron donor. This chain is Phosphoadenosine 5'-phosphosulfate reductase, found in Vibrio campbellii (strain ATCC BAA-1116).